A 119-amino-acid polypeptide reads, in one-letter code: Putative yippee-like protein Os10g0369500 (119 aa).

In terms of domain architecture, Yippee spans 21–118 (AVLKCRRCRV…LEKARMWKEA (98 aa)). Zn(2+)-binding residues include Cys25, Cys28, Cys81, and Cys84.

This sequence belongs to the yippee family.

This is Putative yippee-like protein Os10g0369500 from Oryza sativa subsp. japonica (Rice).